A 201-amino-acid polypeptide reads, in one-letter code: Oxalate oxidase 1 (201 aa).

A disulfide bridge connects residues cysteine 10 and cysteine 26. The 152-residue stretch at 40–191 (SKLTKAGNTS…ALRVEAGVVE (152 aa)) folds into the Cupin type-1 domain. Asparagine 47 carries N-linked (GlcNAc...) asparagine glycosylation. Asparagine 75 and asparagine 85 together coordinate oxalate. Residues histidine 88, histidine 90, glutamate 95, and histidine 137 each coordinate Mn(2+). Positions 90 and 95 each coordinate oxalate.

Belongs to the germin family. As to quaternary structure, homo hexamer; a trimer of dimers. Glycosylated. A form called G contains antennary GlcNAc residues, whereas a form called G' lacks antennary GlcNAc residues in its otherwise identical glycans.

It localises to the secreted. The protein resides in the extracellular space. Its subcellular location is the apoplast. The protein localises to the cell wall. It carries out the reaction oxalate + O2 + 2 H(+) = H2O2 + 2 CO2. Releases hydrogen peroxide in the apoplast which may be important for cross-linking reactions in the cell wall biochemistry. May play an important role in several aspects of plant growth and defense mechanisms. The protein is Oxalate oxidase 1 of Hordeum vulgare (Barley).